The following is a 278-amino-acid chain: Large ribosomal subunit protein uL2 (278 aa).

2 disordered regions span residues 33 to 53 (LTEG…TSRG) and 221 to 278 (RGVA…KKKR). Residues 269 to 278 (IRSRHAKKKR) show a composition bias toward basic residues.

Belongs to the universal ribosomal protein uL2 family. Part of the 50S ribosomal subunit. Forms a bridge to the 30S subunit in the 70S ribosome.

One of the primary rRNA binding proteins. Required for association of the 30S and 50S subunits to form the 70S ribosome, for tRNA binding and peptide bond formation. It has been suggested to have peptidyltransferase activity; this is somewhat controversial. Makes several contacts with the 16S rRNA in the 70S ribosome. This chain is Large ribosomal subunit protein uL2, found in Novosphingobium aromaticivorans (strain ATCC 700278 / DSM 12444 / CCUG 56034 / CIP 105152 / NBRC 16084 / F199).